Here is a 540-residue protein sequence, read N- to C-terminus: Lysosomal cobalamin transport escort protein LMBD1 (540 aa).

Residues M1–E10 lie on the Extracellular side of the membrane. Residues L11–I31 form a helical membrane-spanning segment. Over Y32–A50 the chain is Cytoplasmic. The chain crosses the membrane as a helical span at residues I51–V71. Over S72–G100 the chain is Extracellular. N78 and N88 each carry an N-linked (GlcNAc...) asparagine glycan. The helical transmembrane segment at Y101 to F121 threads the bilayer. Residues Y122–T144 lie on the Cytoplasmic side of the membrane. The helical transmembrane segment at L145–V165 threads the bilayer. At P166 to H188 the chain is on the extracellular side. A glycan (N-linked (GlcNAc...) asparagine) is linked at N170. A helical transmembrane segment spans residues G189–I209. At T210–K305 the chain is on the cytoplasmic side. The short motif at Y232 to L235 is the YERL motif; mediates interaction with adapter protein complex 2 and is essential for its function in clathrin-mediated endocytosis of INSR element. T238 is subject to Phosphothreonine. A WTKF motif; mediates interaction with adapter protein complex 2 and is essential for its function in clathrin-mediated endocytosis of INSR motif is present at residues W294–F297. Residues I306 to S326 form a helical membrane-spanning segment. Over N327–P364 the chain is Extracellular. Residue N347 is glycosylated (N-linked (GlcNAc...) asparagine). The chain crosses the membrane as a helical span at residues L365 to I385. Over R386–Q408 the chain is Cytoplasmic. The chain crosses the membrane as a helical span at residues A409–Y429. At S430–K486 the chain is on the extracellular side. N-linked (GlcNAc...) asparagine glycans are attached at residues N448 and N457. The chain crosses the membrane as a helical span at residues F487–I507. Residues G508–A540 are Cytoplasmic-facing. 2 positions are modified to phosphoserine: S528 and S531.

Belongs to the LIMR family. LMBRD1 subfamily. In terms of assembly, (Microbial infection) Interacts with hepatitis delta virus NES (HDAg-L). As to quaternary structure, interacts with ABCD4; this interaction induces the translocation of ABCD4 from the endoplasmic reticulum to the lysosome. Interacts with ABCD4 and MMACHC; this interaction ensures the transport of cobalamin from the lysosome to the cytoplasm. Interacts with INSR, adapter protein complex 2 and clathrin heavy chain. Post-translationally, N-glycosylated. Isoform 3 is expressed in liver.

Its subcellular location is the endoplasmic reticulum membrane. The protein resides in the lysosome membrane. It localises to the cell membrane. The protein localises to the cytoplasmic vesicle. It is found in the clathrin-coated vesicle. Functionally, lysosomal membrane chaperone required to export cobalamin (vitamin B12) from the lysosome to the cytosol, allowing its conversion to cofactors. Targets ABCD4 transporter from the endoplasmic reticulum to the lysosome. Then forms a complex with lysosomal ABCD4 and cytoplasmic MMACHC to transport cobalamin across the lysosomal membrane. Acts as an adapter protein which plays an important role in mediating and regulating the internalization of the insulin receptor (INSR). Involved in clathrin-mediated endocytosis of INSR via its interaction with adapter protein complex 2. Essential for the initiation of gastrulation and early formation of mesoderm structures during embryogenesis. In terms of biological role, (Microbial infection) May play a role in the assembly of hepatitis delta virus (HDV). The polypeptide is Lysosomal cobalamin transport escort protein LMBD1 (Homo sapiens (Human)).